The chain runs to 418 residues: MEDSSVFLLCLAASSGVPLYSRSKGSSRQLTFSVIGSLNGVHMFASNQDVLLTSTCTENTRVAWRAFHDSITLIVMSSESGASKLSLNRLLENVFNAMVLVIGLDDLVNIKNVERLKKDLRACYRLIDSFLLETEKMGDLTQCVDCVIAYDVPILQECLDNFTQAAESNFGCLMAGGKVVVATEKWWRLSSQEVMLLCWLVASLAPHSSRDYPVYLPQGSPTVPHRLLTFQLVPGVDVCVLCGPKPSLQKVETELIERFWKPVHDPIKSCLRVQMRSFPASVPLHHGILGLLLINRDMNKSLYTVQAHPMEEMQKTDLKLTLEQRRSALRSFYTLAMSRYFPSERADGKNTLPSEESFQSGFSHSAHQCYTISSSCKCYGMKTELHLLFLLLKPEVPTFSMRSIANKTIAAFTKDFPF.

It belongs to the fuzzy family. In terms of assembly, interacts with rsg1. Interacts with intu and wdpcp; fuz, intu and wdpcp probably form the core CPLANE (ciliogenesis and planar polarity effectors) complex.

The protein resides in the cytoplasm. The protein localises to the cytoskeleton. It is found in the cilium basal body. In terms of biological role, probable planar cell polarity effector involved in cilium biogenesis. Proposed to function as core component of the CPLANE (ciliogenesis and planar polarity effectors) complex involved in the recruitment of peripheral IFT-A proteins to basal bodies. May regulate protein and membrane transport to the cilium. May control the organization of the apical actin cytoskeleton, which is essential for the normal orientation of elongating ciliary microtubules. The polypeptide is Protein fuzzy homolog (fuz) (Xenopus tropicalis (Western clawed frog)).